The following is a 3462-amino-acid chain: DNA-directed RNA polymerase subunit beta'' (3462 aa).

4 residues coordinate Zn(2+): Cys263, Cys335, Cys342, and Cys345. Positions 541–1085 are insert-1; that stretch reads KIDDQELSSV…PNKIFSSNLF (545 aa). An insert-2 region spans residues 1528–1585; sequence PQSANERKQILKKARQKLRLFPLNLNEKKNRFSSVTLDLLRDQTTLHKMQSCGEAESG. The interval 1602 to 1699 is insert-3; that stretch reads KKITEIFTFC…FSKQMGNRLL (98 aa). The insert-4 stretch occupies residues 1938 to 2168; the sequence is LKNKMNQSFS…SQASWILETN (231 aa). Residues 2320 to 2870 form an insert-5 region; that stretch reads NLVSGKLNFL…KKKIAKEGAF (551 aa). The interval 2972 to 3196 is insert-6; the sequence is SKSQRGWFHN…IGQLLRYGKE (225 aa).

Belongs to the RNA polymerase beta' chain family. RpoC2 subfamily. As to quaternary structure, in plastids the minimal PEP RNA polymerase catalytic core is composed of four subunits: alpha, beta, beta', and beta''. When a (nuclear-encoded) sigma factor is associated with the core the holoenzyme is formed, which can initiate transcription. The cofactor is Zn(2+).

The protein localises to the plastid. The protein resides in the chloroplast. The catalysed reaction is RNA(n) + a ribonucleoside 5'-triphosphate = RNA(n+1) + diphosphate. In terms of biological role, DNA-dependent RNA polymerase catalyzes the transcription of DNA into RNA using the four ribonucleoside triphosphates as substrates. The chain is DNA-directed RNA polymerase subunit beta'' from Tupiella akineta (Green alga).